The sequence spans 164 residues: Protein-export protein SecB (164 aa).

It belongs to the SecB family. Homotetramer, a dimer of dimers. One homotetramer interacts with 1 SecA dimer.

It is found in the cytoplasm. Functionally, one of the proteins required for the normal export of preproteins out of the cell cytoplasm. It is a molecular chaperone that binds to a subset of precursor proteins, maintaining them in a translocation-competent state. It also specifically binds to its receptor SecA. This chain is Protein-export protein SecB, found in Shewanella denitrificans (strain OS217 / ATCC BAA-1090 / DSM 15013).